The primary structure comprises 82 residues: Small ribosomal subunit protein uS17 (82 aa).

Belongs to the universal ribosomal protein uS17 family. Part of the 30S ribosomal subunit.

Functionally, one of the primary rRNA binding proteins, it binds specifically to the 5'-end of 16S ribosomal RNA. The protein is Small ribosomal subunit protein uS17 of Paracoccus denitrificans (strain Pd 1222).